Reading from the N-terminus, the 313-residue chain is Type II methyltransferase M.NlaX (313 aa).

Residues 2–308 (FKIIDLFAGI…EQMKAALSAV (307 aa)) enclose the SAM-dependent MTase C5-type domain. C74 is an active-site residue.

This sequence belongs to the class I-like SAM-binding methyltransferase superfamily. C5-methyltransferase family.

It carries out the reaction a 2'-deoxycytidine in DNA + S-adenosyl-L-methionine = a 5-methyl-2'-deoxycytidine in DNA + S-adenosyl-L-homocysteine + H(+). Functionally, a methylase, recognizes the double-stranded sequence 5'-CCNGG-3' and methylates C-2 on both strands. May be the equivalent of dcm in this bacteria, or it may protect the DNA from cleavage by the putative NlaXP endonuclease. The chain is Type II methyltransferase M.NlaX (nlaXM) from Neisseria lactamica.